Here is a 46-residue protein sequence, read N- to C-terminus: DNA-directed RNA polymerase subunit Rpo12 (46 aa).

Residues Cys-9, Cys-24, and Cys-27 each coordinate Zn(2+).

This sequence belongs to the archaeal Rpo12/eukaryotic RPC10 RNA polymerase subunit family. Part of the RNA polymerase complex. Interacts with Rpo3. Forms an Rpo3-Rpo10-Rpo11-Rpo12 complex upon coexpression. Zn(2+) is required as a cofactor.

The protein localises to the cytoplasm. It catalyses the reaction RNA(n) + a ribonucleoside 5'-triphosphate = RNA(n+1) + diphosphate. DNA-dependent RNA polymerase (RNAP) catalyzes the transcription of DNA into RNA using the four ribonucleoside triphosphates as substrates. The sequence is that of DNA-directed RNA polymerase subunit Rpo12 from Methanocaldococcus jannaschii (strain ATCC 43067 / DSM 2661 / JAL-1 / JCM 10045 / NBRC 100440) (Methanococcus jannaschii).